The following is a 122-amino-acid chain: Lysozyme (122 aa).

The 116-residue stretch at 3–118 folds into the I-type lysozyme domain; the sequence is GGIVSQRCLS…WNRLQKISGC (116 aa). 7 disulfides stabilise this stretch: cysteine 10-cysteine 86, cysteine 13-cysteine 118, cysteine 15-cysteine 21, cysteine 26-cysteine 35, cysteine 48-cysteine 68, cysteine 58-cysteine 64, and cysteine 82-cysteine 100. The active-site Proton donor is glutamate 18. Residue aspartate 29 is the Nucleophile of the active site. 41-47 lines the substrate pocket; that stretch reads KEAYWID. Residues tyrosine 72, histidine 93, 93–95, and lysine 102 each bind substrate; that span reads HNG.

Belongs to the glycosyl hydrolase 22 family. Type-I lysozyme subfamily. As to quaternary structure, monomer.

It localises to the secreted. The enzyme catalyses Hydrolysis of (1-&gt;4)-beta-linkages between N-acetylmuramic acid and N-acetyl-D-glucosamine residues in a peptidoglycan and between N-acetyl-D-glucosamine residues in chitodextrins.. In terms of biological role, has bacteriolytic activity against Gram-positive bacteria M.luteus. Also has chitinase activity. This chain is Lysozyme, found in Meretrix lusoria (Hard clam).